The chain runs to 227 residues: Ribosomal RNA large subunit methyltransferase E (227 aa).

Residues glycine 78, tryptophan 80, aspartate 103, aspartate 119, and aspartate 143 each contribute to the S-adenosyl-L-methionine site. Lysine 183 acts as the Proton acceptor in catalysis.

It belongs to the class I-like SAM-binding methyltransferase superfamily. RNA methyltransferase RlmE family.

Its subcellular location is the cytoplasm. It carries out the reaction uridine(2552) in 23S rRNA + S-adenosyl-L-methionine = 2'-O-methyluridine(2552) in 23S rRNA + S-adenosyl-L-homocysteine + H(+). In terms of biological role, specifically methylates the uridine in position 2552 of 23S rRNA at the 2'-O position of the ribose in the fully assembled 50S ribosomal subunit. This is Ribosomal RNA large subunit methyltransferase E from Rickettsia africae (strain ESF-5).